The primary structure comprises 215 residues: Large ribosomal subunit protein uL4 (215 aa).

The segment at 43-101 (HQRQGTSKTKERGEVRGSGRKLYRQKGTGNARVGDAQSPIRRGGGRAHGARPRDYAHDL) is disordered. The segment covering 50-59 (KTKERGEVRG) has biased composition (basic and acidic residues).

It belongs to the universal ribosomal protein uL4 family. Part of the 50S ribosomal subunit.

Functionally, one of the primary rRNA binding proteins, this protein initially binds near the 5'-end of the 23S rRNA. It is important during the early stages of 50S assembly. It makes multiple contacts with different domains of the 23S rRNA in the assembled 50S subunit and ribosome. Forms part of the polypeptide exit tunnel. In Salinibacter ruber (strain DSM 13855 / M31), this protein is Large ribosomal subunit protein uL4.